The primary structure comprises 100 residues: Large ribosomal subunit protein eL36B (100 aa).

It belongs to the eukaryotic ribosomal protein eL36 family. Component of the large ribosomal subunit (LSU). Mature yeast ribosomes consist of a small (40S) and a large (60S) subunit. The 40S small subunit contains 1 molecule of ribosomal RNA (18S rRNA) and 33 different proteins (encoded by 57 genes). The large 60S subunit contains 3 rRNA molecules (25S, 5.8S and 5S rRNA) and 46 different proteins (encoded by 81 genes).

It localises to the cytoplasm. Its function is as follows. Component of the ribosome, a large ribonucleoprotein complex responsible for the synthesis of proteins in the cell. The small ribosomal subunit (SSU) binds messenger RNAs (mRNAs) and translates the encoded message by selecting cognate aminoacyl-transfer RNA (tRNA) molecules. The large subunit (LSU) contains the ribosomal catalytic site termed the peptidyl transferase center (PTC), which catalyzes the formation of peptide bonds, thereby polymerizing the amino acids delivered by tRNAs into a polypeptide chain. The nascent polypeptides leave the ribosome through a tunnel in the LSU and interact with protein factors that function in enzymatic processing, targeting, and the membrane insertion of nascent chains at the exit of the ribosomal tunnel. In Saccharomyces cerevisiae (strain ATCC 204508 / S288c) (Baker's yeast), this protein is Large ribosomal subunit protein eL36B.